Reading from the N-terminus, the 123-residue chain is Ribosome-binding factor A (123 aa).

Belongs to the RbfA family. Monomer. Binds 30S ribosomal subunits, but not 50S ribosomal subunits or 70S ribosomes.

It localises to the cytoplasm. One of several proteins that assist in the late maturation steps of the functional core of the 30S ribosomal subunit. Associates with free 30S ribosomal subunits (but not with 30S subunits that are part of 70S ribosomes or polysomes). Required for efficient processing of 16S rRNA. May interact with the 5'-terminal helix region of 16S rRNA. The sequence is that of Ribosome-binding factor A from Neisseria gonorrhoeae (strain ATCC 700825 / FA 1090).